Consider the following 416-residue polypeptide: Putative UV-damage repair protein UvrX (416 aa).

One can recognise a UmuC domain in the interval 12–196 (ILCVDMKSFY…RPLSKMWGIG (185 aa)). Residues aspartate 16 and aspartate 115 each coordinate Mg(2+). The active site involves glutamate 116.

It belongs to the DNA polymerase type-Y family. It depends on Mg(2+) as a cofactor.

The polypeptide is Putative UV-damage repair protein UvrX (uvrX) (Bacillus subtilis (strain 168)).